Reading from the N-terminus, the 282-residue chain is Bis(5'-nucleosyl)-tetraphosphatase, symmetrical (282 aa).

Belongs to the Ap4A hydrolase family.

It carries out the reaction P(1),P(4)-bis(5'-adenosyl) tetraphosphate + H2O = 2 ADP + 2 H(+). Its function is as follows. Hydrolyzes diadenosine 5',5'''-P1,P4-tetraphosphate to yield ADP. The sequence is that of Bis(5'-nucleosyl)-tetraphosphatase, symmetrical from Salmonella paratyphi C (strain RKS4594).